The following is a 232-amino-acid chain: Lipoprotein-releasing system ATP-binding protein LolD (232 aa).

The ABC transporter domain occupies 11 to 231; sequence VYLHDIKREY…SLENGHVVEL (221 aa). Position 47-54 (47-54) interacts with ATP; the sequence is APSGSGKS.

This sequence belongs to the ABC transporter superfamily. Lipoprotein translocase (TC 3.A.1.125) family. The complex is composed of two ATP-binding proteins (LolD) and two transmembrane proteins (LolC and LolE).

The protein localises to the cell inner membrane. In terms of biological role, part of the ABC transporter complex LolCDE involved in the translocation of mature outer membrane-directed lipoproteins, from the inner membrane to the periplasmic chaperone, LolA. Responsible for the formation of the LolA-lipoprotein complex in an ATP-dependent manner. The polypeptide is Lipoprotein-releasing system ATP-binding protein LolD (Nitrobacter winogradskyi (strain ATCC 25391 / DSM 10237 / CIP 104748 / NCIMB 11846 / Nb-255)).